The following is a 459-amino-acid chain: Putrescine aminotransferase (459 aa).

Pyridoxal 5'-phosphate-binding positions include 150–151 and Gln274; that span reads GT. N6-(pyridoxal phosphate)lysine is present on Lys300. Thr332 provides a ligand contact to pyridoxal 5'-phosphate.

It belongs to the class-III pyridoxal-phosphate-dependent aminotransferase family. Putrescine aminotransferase subfamily. Pyridoxal 5'-phosphate is required as a cofactor.

It carries out the reaction an alkane-alpha,omega-diamine + 2-oxoglutarate = an omega-aminoaldehyde + L-glutamate. It catalyses the reaction putrescine + 2-oxoglutarate = 1-pyrroline + L-glutamate + H2O. The enzyme catalyses cadaverine + 2-oxoglutarate = 5-aminopentanal + L-glutamate. It functions in the pathway amine and polyamine degradation; putrescine degradation; 4-aminobutanal from putrescine (transaminase route): step 1/1. Catalyzes the aminotransferase reaction from putrescine to 2-oxoglutarate, leading to glutamate and 4-aminobutanal, which spontaneously cyclizes to form 1-pyrroline. This is the first step in one of two pathways for putrescine degradation, where putrescine is converted into 4-aminobutanoate (gamma-aminobutyrate or GABA) via 4-aminobutanal. Also functions as a cadaverine transaminase in a a L-lysine degradation pathway to succinate that proceeds via cadaverine, glutarate and L-2-hydroxyglutarate. This is Putrescine aminotransferase from Enterobacter sp. (strain 638).